A 397-amino-acid chain; its full sequence is Zinc finger transcription factor family protein 30 (397 aa).

Residues M1–V40 are disordered. Over residues T14–N27 the composition is skewed to acidic residues. 3 C2H2-type zinc fingers span residues F51–H74, Y78–H102, and Y107–H125.

The protein localises to the nucleus. This is Zinc finger transcription factor family protein 30 (ztf-30) from Caenorhabditis elegans.